A 5538-amino-acid chain; its full sequence is Leashin (5538 aa).

Gly residues predominate over residues 1 to 10 (MFRALMGGGR). 22 disordered regions span residues 1 to 270 (MFRA…SSMG), 286 to 315 (EVDP…TFGI), 331 to 365 (LPLP…PHTH), 510 to 555 (SRDA…KKSS), 596 to 712 (TESV…DISQ), 800 to 901 (AATS…FPTG), 913 to 944 (ALAS…PVPT), 1027 to 1145 (NRPH…KDSF), 1164 to 1297 (VLSG…GYRD), 1310 to 1398 (PTPP…RYVS), 1432 to 1993 (EDPT…TSVE), 2067 to 2146 (SELL…VNAF), 2165 to 2207 (NRLS…SPPA), 2233 to 3065 (PEAA…SQPI), 3077 to 3894 (MAEE…EIVS), 3910 to 4034 (EEKA…DTGL), 4072 to 4128 (KFKQ…EEPL), 4238 to 4421 (EAAL…SNQA), 4442 to 4463 (PRPL…DEND), 4509 to 4698 (LRRQ…TSNT), 4733 to 4850 (KTDG…VEQA), and 4910 to 5052 (ALTV…RHRR). The segment at 1-1100 (MFRALMGGGR…RASGVQLIDR (1100 aa)) is woronin bodies-binding region. Positions 14 to 23 (SRSTTSSSKS) are enriched in low complexity. Composition is skewed to basic and acidic residues over residues 42-51 (SRGDDRDRGL) and 89-167 (VEHD…ERSR). Positions 299–313 (AGTTSEPPKPSNTTF) are enriched in polar residues. Residues 334–352 (PASPTSPPEPVPTTAPYAP) show a composition bias toward pro residues. The span at 514-523 (PRKHHYRQRR) shows a compositional bias: basic residues. The span at 598–607 (SVSTARRSQT) shows a compositional bias: polar residues. Basic residues predominate over residues 639 to 655 (HRSRSRSHSSSRNRRHS). The segment covering 660–674 (AAVGAAVGSGAIALA) has biased composition (low complexity). Residues 682–698 (SRSRSRSRFPRKSKGRK) show a composition bias toward basic residues. Positions 809–825 (RAGEILVAKETRSRHSD) are enriched in basic and acidic residues. Composition is skewed to low complexity over residues 842–851 (GDQSSSSVSS) and 862–880 (GSDE…GWRW). Basic residues predominate over residues 881 to 891 (GSKKNKKKKRA). Composition is skewed to basic and acidic residues over residues 1068–1091 (LTKE…DAER), 1098–1145 (IDRD…KDSF), 1178–1198 (SQRR…RGSE), 1207–1226 (SKSE…RQPE), 1356–1365 (WGEHKTHEYE), 1375–1387 (SVDH…REQP), 1447–1462 (GRVE…ESKS), and 1478–1488 (EEKAPSSRVIE). The segment covering 1506 to 1516 (QESSEPQTRTS) has biased composition (low complexity). 3 stretches are compositionally biased toward basic and acidic residues: residues 1521–1536 (VIDR…DGSR), 1549–1559 (GKERDESELRA), and 1572–1594 (EELR…DRRS). Over residues 1639-1648 (KKKRRKRRSK) the composition is skewed to basic residues. Basic and acidic residues-rich tracts occupy residues 1672–1686 (EKLK…EKKA), 1700–1773 (EPVD…QRRE), and 1788–1800 (KSGE…KLSE). 2 stretches are compositionally biased toward low complexity: residues 1867 to 1876 (PAPRSRSRPA) and 1889 to 1898 (SQSSRRSSIL). The span at 1950–1975 (KNSREMRPLWLVERHGPGHGEHKLEE) shows a compositional bias: basic and acidic residues. Polar residues-rich tracts occupy residues 1984–1993 (KTSSANTSVE) and 2121–2130 (TPQNNVTAAS). Basic and acidic residues-rich tracts occupy residues 2187 to 2196 (DADRTHKPIA), 2269 to 2279 (VPRDDKRRDSV), and 2307 to 2320 (GENK…KNEN). Positions 2321–2331 (ANDNSQAQTEQ) are enriched in polar residues. Over residues 2344–2355 (AKKKKKKNKKKR) the composition is skewed to basic residues. Residues 2358–2370 (MDSNTQEPTTPVD) show a composition bias toward polar residues. The segment covering 2427–2441 (DVEKAIEAPDVRKEL) has biased composition (basic and acidic residues). A compositionally biased stretch (low complexity) spans 2449-2461 (APEDTPAEPTAET). Residues 2473-2484 (KKSKKKKKKKNK) are compositionally biased toward basic residues. Positions 2494–2525 (DPASTETPEASAANSQVVAAEQVESTLETTQP) are enriched in polar residues. 3 stretches are compositionally biased toward basic and acidic residues: residues 2580–2590 (NQAKELPHPEE), 2647–2661 (PEDK…DLKS), and 2677–2691 (ALDK…RPAE). A compositionally biased stretch (low complexity) spans 2719–2734 (EEPTPTAAELETPLSR). Basic residues predominate over residues 2735–2747 (KNSKKNKKKNKRK). Positions 2796–2812 (DENKGESRDVQAVKEET) are enriched in basic and acidic residues. Residues 2874 to 2884 (KKKAKKKKNRK) show a composition bias toward basic residues. A compositionally biased stretch (polar residues) spans 2885–2894 (TANVSESQPE). Composition is skewed to basic residues over residues 3003–3013 (KKSKKNKKKKQ) and 3089–3100 (KKTKKEKKKKRQ). The segment covering 3145–3172 (AIEHAEAAAEHSQEQPNKDVTLHADHSP) has biased composition (basic and acidic residues). The span at 3248–3268 (PAMEGGAAAEELVAVEPDVLE) shows a compositional bias: low complexity. Positions 3293–3303 (ELVNAETTQKT) are enriched in polar residues. Residues 3329–3341 (SKKKDKKKKKKRQ) are compositionally biased toward basic residues. Residues 3347–3367 (DEQRSSTKEEPTAEFSSDHVP) show a composition bias toward basic and acidic residues. Composition is skewed to low complexity over residues 3397 to 3409 (TQTA…SSAS) and 3422 to 3435 (ESTQ…AQTA). The span at 3436-3450 (KSKKKAKKDKKKRKS) shows a compositional bias: basic residues. Residues 3480-3495 (EGPKPGDKPTSPKDSS) show a composition bias toward basic and acidic residues. The segment covering 3547-3564 (EEQAVVEETVAPPVVDEA) has biased composition (low complexity). 2 stretches are compositionally biased toward polar residues: residues 3565–3580 (SQLQ…LWSE) and 3604–3613 (VSPSLENNEG). 2 stretches are compositionally biased toward basic residues: residues 3642–3652 (KSKKNKKKKKR) and 3716–3730 (KAKK…KRQS). Positions 3768–3787 (TFSQETSETISTEAKSSEPS) are enriched in polar residues. The span at 3800 to 3819 (KENQSHDTEPHGGNDKDLTW) shows a compositional bias: basic and acidic residues. Over residues 3823–3837 (MVSSQVEQQQGTPSD) the composition is skewed to polar residues. A compositionally biased stretch (basic and acidic residues) spans 3876–3893 (DRLERSGEEGTRVKKEIV). 2 stretches are compositionally biased toward polar residues: residues 3915-3925 (ISSQGEDTIQV) and 3965-3980 (KDQF…SQSK). Residues 4010–4020 (TSQDDSVDAVQ) show a composition bias toward acidic residues. Over residues 4111-4123 (ESRENKFKEKQLA) the composition is skewed to basic and acidic residues. Over residues 4244–4255 (KNSKKKSKKAKK) the composition is skewed to basic residues. Positions 4328-4345 (LGQTPNMDNQTDDVQSTE) are enriched in polar residues. Residues 4378-4391 (KLSKKDRRKAKKKS) show a composition bias toward basic residues. Residues 4392 to 4406 (AKDAIEPSDEPELRN) show a composition bias toward basic and acidic residues. Residues 4495 to 5538 (AIAEFDETAI…SSTMDISNVI (1044 aa)) are septal pore-binding region. The segment covering 4554–4570 (TEQSAGLQAKSVSSQGA) has biased composition (polar residues). Composition is skewed to basic and acidic residues over residues 4574–4591 (IQDD…DQTK) and 4660–4673 (EESH…EKGP). Low complexity predominate over residues 4940–4954 (SSVSSVKSVQSTHSV). Positions 4966 to 4988 (RNTSGDLRAASQAQESHGTQPHA) are enriched in polar residues. The segment covering 4989 to 4998 (TPQPPQPPPS) has biased composition (pro residues). A coiled-coil region spans residues 5050-5223 (HRRSMQHLQE…QQQIAASLHD (174 aa)).

In terms of assembly, binds directly or indirectly to the Woronin body major protein hexA.

It localises to the cell septum. Acts as the tether and is essential for anchoring of Woronin bodies at the septal pore. In damaged hyphae, Woronin bodies occlude septal pores in order to separate intact from damaged compartments. The chain is Leashin from Aspergillus fumigatus (strain ATCC MYA-4609 / CBS 101355 / FGSC A1100 / Af293) (Neosartorya fumigata).